We begin with the raw amino-acid sequence, 94 residues long: Probable FAD-linked sulfhydryl oxidase FPV093 (94 aa).

Positions 1–94 constitute an ERV/ALR sulfhydryl oxidase domain; that stretch reads MDPRYWGSSF…IDIKKVKKLI (94 aa). A disulfide bridge connects residues cysteine 41 and cysteine 44.

The protein belongs to the poxviruses E10 family. FAD is required as a cofactor.

The catalysed reaction is 2 R'C(R)SH + O2 = R'C(R)S-S(R)CR' + H2O2. FAD-dependent sulfhydryl oxidase that catalyzes disulfide bond formation. The protein is Probable FAD-linked sulfhydryl oxidase FPV093 of Fowlpox virus (strain NVSL) (FPV).